Consider the following 402-residue polypeptide: Putative neuropeptide Y receptor 11 (402 aa).

At 1–45 the chain is on the extracellular side; that stretch reads MGSVNESCDNYVEIFNKINYFFRDDQVINGTEYSPKEFGYFITFA. Asparagine 5 and asparagine 29 each carry an N-linked (GlcNAc...) asparagine glycan. The chain crosses the membrane as a helical span at residues 46-66; the sequence is YMLIILFGAIGNFLTIIVVIL. At 67–85 the chain is on the cytoplasmic side; the sequence is NPAMRTTRNFFILNLALSD. A helical transmembrane segment spans residues 86–106; sequence FFVCIVTAPTTLYTVLYMFWP. Residues 107-122 are Extracellular-facing; sequence FSRTLCKIAGSLQGFN. A disulfide bridge connects residues cysteine 112 and cysteine 194. Residues 123–143 form a helical membrane-spanning segment; sequence IFLSTFSIASIAVDRYVLIIF. Over 144 to 152 the chain is Cytoplasmic; it reads PTKRERQQN. Residues 153–173 form a helical membrane-spanning segment; the sequence is LSFCFFIMIWVISLILAVPLL. Over 174-210 the chain is Extracellular; that stretch reads QASDLTPVFVEPSCDLALYICHEQNEIWEKMIISKGT. The helical transmembrane segment at 211 to 231 threads the bilayer; the sequence is YTLAVLITQYAFPLFSLVFAY. The Cytoplasmic portion of the chain corresponds to 232 to 272; the sequence is SRIAHRMKLRFANRNQNVTTNTNTSQRRRSVVERQRRTHLL. A helical membrane pass occupies residues 273–293; it reads LVCVVAVFAVAWLPLNVFHIF. Over 294 to 306 the chain is Extracellular; it reads NTFELVNSFSVTT. Residues 307–328 form a helical membrane-spanning segment; it reads FSICHCLAMCSACLNPLIYAFF. Topologically, residues 329–402 are cytoplasmic; that stretch reads NHNFRIEFMH…LSAMEQDEQL (74 aa).

This sequence belongs to the G-protein coupled receptor 1 family.

The protein resides in the cell membrane. Could be a receptor for neuropeptide Y and peptide YY. The polypeptide is Putative neuropeptide Y receptor 11 (npr-11) (Caenorhabditis elegans).